Here is a 726-residue protein sequence, read N- to C-terminus: Methionine--tRNA ligase (726 aa).

The 'HIGH' region motif lies at 12 to 22 (PYVNNIPHLGN). Zn(2+)-binding residues include Cys-143, Cys-146, Cys-155, and Cys-158. The 'KMSKS' region motif lies at 330–334 (KFSKS). Residue Lys-333 coordinates ATP. A tRNA-binding domain is found at 562–667 (FSEQICLKTV…DNPIPGERVI (106 aa)).

The protein belongs to the class-I aminoacyl-tRNA synthetase family. MetG type 1 subfamily. Homodimer. Zn(2+) serves as cofactor.

The protein localises to the cytoplasm. It carries out the reaction tRNA(Met) + L-methionine + ATP = L-methionyl-tRNA(Met) + AMP + diphosphate. Functionally, is required not only for elongation of protein synthesis but also for the initiation of all mRNA translation through initiator tRNA(fMet) aminoacylation. The chain is Methionine--tRNA ligase from Borrelia recurrentis (strain A1).